The primary structure comprises 169 residues: Lipoprotein signal peptidase (169 aa).

4 helical membrane passes run 4-24, 42-62, 70-90, and 102-122; these read PICS…IVDL, LIPF…SFLA, WFFA…MYRS, and ALII…GAVI. Catalysis depends on residues aspartate 123 and aspartate 141. Residues 137-157 form a helical membrane-spanning segment; that stretch reads FNIADTAICIGAALVIFEGFI.

Belongs to the peptidase A8 family.

The protein resides in the cell inner membrane. It carries out the reaction Release of signal peptides from bacterial membrane prolipoproteins. Hydrolyzes -Xaa-Yaa-Zaa-|-(S,diacylglyceryl)Cys-, in which Xaa is hydrophobic (preferably Leu), and Yaa (Ala or Ser) and Zaa (Gly or Ala) have small, neutral side chains.. Its pathway is protein modification; lipoprotein biosynthesis (signal peptide cleavage). Its function is as follows. This protein specifically catalyzes the removal of signal peptides from prolipoproteins. The polypeptide is Lipoprotein signal peptidase (Yersinia enterocolitica serotype O:8 / biotype 1B (strain NCTC 13174 / 8081)).